The sequence spans 239 residues: UPF0173 metal-dependent hydrolase Dvul_0081 (239 aa).

Belongs to the UPF0173 family.

This chain is UPF0173 metal-dependent hydrolase Dvul_0081, found in Nitratidesulfovibrio vulgaris (strain DP4) (Desulfovibrio vulgaris).